The primary structure comprises 332 residues: UBA domain-containing protein Mud1 (332 aa).

The active site involves Asp-127. Residues 246 to 298 (GLGIEPASKASASSPNPQSGTRLGTKESVAPNNEGSSNPPSLVNPPTDPGLNS) are disordered. The segment covering 251–264 (PASKASASSPNPQS) has biased composition (low complexity). The segment covering 275–286 (APNNEGSSNPPS) has biased composition (polar residues). One can recognise a UBA domain in the interval 291 to 332 (PTDPGLNSKIAQLVSMGFDPLEAAQALDAANGDLDVAASFLL).

This sequence belongs to the DDI1 family. As to quaternary structure, homodimer. Interacts (via UBA domain) with polyubiquitin (polyUb) chains (via Lys-48-linked polyUbs). Has weak binding affinity for monoubiquitin. According to another report, has no affinity for monoubiquitin.

Its subcellular location is the cytoplasm. The protein localises to the cell membrane. Functionally, recognizes and binds polyubiquitin chains. Acts as a linker between the 19S proteasome and polyubiquitinated proteins via UBA domain interactions with ubiquitin for their subsequent degradation. Aspartic protease. Appears to act as negative regulator of constitutive exocytosis. May act at the level of secretory vesicle docking and fusion as a competitive inhibitor of SNARE assembly. Required for S-phase checkpoint control. This is UBA domain-containing protein Mud1 from Schizosaccharomyces pombe (strain 972 / ATCC 24843) (Fission yeast).